Here is a 78-residue protein sequence, read N- to C-terminus: Ferritin light chain (78 aa).

One can recognise a Ferritin-like diiron domain in the interval 1–59 (EAALHLEKGLNQALVDLHALGSARADPHLCDFLENHFLDEEVKLIKKMGDHLTNLRRLS).

This sequence belongs to the ferritin family. Oligomer of 24 subunits. There are two types of subunits: L (light) chain and H (heavy) chain. The major chain can be light or heavy, depending on the species and tissue type. The functional molecule forms a roughly spherical shell with a diameter of 12 nm and contains a central cavity into which the insoluble mineral iron core is deposited. Interacts with NCOA4.

It is found in the cytoplasmic vesicle. It localises to the autophagosome. The protein localises to the cytoplasm. The protein resides in the autolysosome. Functionally, stores iron in a soluble, non-toxic, readily available form. Important for iron homeostasis. Iron is taken up in the ferrous form and deposited as ferric hydroxides after oxidation. Also plays a role in delivery of iron to cells. Mediates iron uptake in capsule cells of the developing kidney. Delivery to lysosomes by the cargo receptor NCOA4 for autophagic degradation and release or iron. The polypeptide is Ferritin light chain (FTL) (Sus scrofa (Pig)).